The following is a 200-amino-acid chain: NADH-quinone oxidoreductase subunit C (200 aa).

This sequence belongs to the complex I 30 kDa subunit family. NDH-1 is composed of 14 different subunits. Subunits NuoB, C, D, E, F, and G constitute the peripheral sector of the complex.

It localises to the cell inner membrane. The catalysed reaction is a quinone + NADH + 5 H(+)(in) = a quinol + NAD(+) + 4 H(+)(out). Its function is as follows. NDH-1 shuttles electrons from NADH, via FMN and iron-sulfur (Fe-S) centers, to quinones in the respiratory chain. The immediate electron acceptor for the enzyme in this species is believed to be ubiquinone. Couples the redox reaction to proton translocation (for every two electrons transferred, four hydrogen ions are translocated across the cytoplasmic membrane), and thus conserves the redox energy in a proton gradient. The chain is NADH-quinone oxidoreductase subunit C from Paraburkholderia xenovorans (strain LB400).